We begin with the raw amino-acid sequence, 160 residues long: Calcium and integrin-binding family member 3 (160 aa).

EF-hand domains follow at residues 39–74 (KDNPFRQRIAQVFSQDGDGHMTLENFLDMFSVMSEM), 76–111 (PRDLKAYYAFKIYDFNNDNYICAWDLEQTVTRLTRG), and 117–152 (EVTLVCEKVLDEADGDQDGRLSLEDFQNMILRAPDF). 10 residues coordinate Ca(2+): Asp-89, Asn-91, Asp-93, Tyr-95, Asp-100, Asp-130, Asp-132, Asp-134, Arg-136, and Asp-141.

As to quaternary structure, monomer and homodimer. Interacts with ITGA2B (via C-terminus cytoplasmic tail region); the interaction is stabilized/increased in a calcium and magnesium-dependent manner. Interacts with TMC1. Expressed in heart, liver and inner ear. In the inner ear, expressed in vestibule and basilar membrane cells. Expressed in megakaryocytes and endothelial cells.

Functionally, acts as an auxiliary subunit of the sensory mechanoelectrical transduction (MET) channel in hair cells. Plays a role in regulating hair cell MET channel localization and function. The protein is Calcium and integrin-binding family member 3 (Cib3) of Mus musculus (Mouse).